Here is a 458-residue protein sequence, read N- to C-terminus: Nuclear transcription factor Y subunit gamma (458 aa).

The segment covering 305 to 315 has biased composition (low complexity); it reads QQQFSQFTDGQ. The segment at 305 to 379 is disordered; that stretch reads QQQFSQFTDG…QQSSTSPPPS (75 aa). The span at 339-351 shows a compositional bias: polar residues; the sequence is TGNSTPCTSSLPT.

The protein belongs to the NFYC/HAP5 subunit family. As to quaternary structure, heterotrimeric transcription factor composed of three components, NF-YA, NF-YB and NF-YC. NF-YB and NF-YC must interact and dimerize for NF-YA association and DNA binding.

The protein resides in the nucleus. Component of the sequence-specific heterotrimeric transcription factor (NF-Y) which specifically recognizes a 5'-CCAAT-3' box motif found in the promoters of its target genes. NF-Y can function as both an activator and a repressor, depending on its interacting cofactors. The chain is Nuclear transcription factor Y subunit gamma (NFYC) from Homo sapiens (Human).